The chain runs to 339 residues: Ketol-acid reductoisomerase (NADP(+)) (339 aa).

One can recognise a KARI N-terminal Rossmann domain in the interval 1-182 (MRVYYDRDAD…GGGRAGVIET (182 aa)). NADP(+) is bound by residues 24 to 27 (YGSQ), arginine 48, serine 51, threonine 53, and 83 to 86 (DELQ). Histidine 108 is a catalytic residue. An NADP(+)-binding site is contributed by glycine 134. One can recognise a KARI C-terminal knotted domain in the interval 183-328 (TFKEECETDL…KKLRSMMPWI (146 aa)). Mg(2+) is bound by residues aspartate 191, glutamate 195, glutamate 227, and glutamate 231. Residue serine 252 coordinates substrate.

It belongs to the ketol-acid reductoisomerase family. Requires Mg(2+) as cofactor.

It carries out the reaction (2R)-2,3-dihydroxy-3-methylbutanoate + NADP(+) = (2S)-2-acetolactate + NADPH + H(+). The enzyme catalyses (2R,3R)-2,3-dihydroxy-3-methylpentanoate + NADP(+) = (S)-2-ethyl-2-hydroxy-3-oxobutanoate + NADPH + H(+). The protein operates within amino-acid biosynthesis; L-isoleucine biosynthesis; L-isoleucine from 2-oxobutanoate: step 2/4. It functions in the pathway amino-acid biosynthesis; L-valine biosynthesis; L-valine from pyruvate: step 2/4. Its function is as follows. Involved in the biosynthesis of branched-chain amino acids (BCAA). Catalyzes an alkyl-migration followed by a ketol-acid reduction of (S)-2-acetolactate (S2AL) to yield (R)-2,3-dihydroxy-isovalerate. In the isomerase reaction, S2AL is rearranged via a Mg-dependent methyl migration to produce 3-hydroxy-3-methyl-2-ketobutyrate (HMKB). In the reductase reaction, this 2-ketoacid undergoes a metal-dependent reduction by NADPH to yield (R)-2,3-dihydroxy-isovalerate. In Bartonella tribocorum (strain CIP 105476 / IBS 506), this protein is Ketol-acid reductoisomerase (NADP(+)).